The primary structure comprises 490 residues: Protein lag-3 (490 aa).

Disordered regions lie at residues 18-55, 105-155, 213-235, 307-362, and 391-490; these read PSVA…EDEP, EDEE…PTSE, SSAD…SPAE, SSSE…MQRI, and QQQQ…ANIN. Over residues 105-119 the composition is skewed to basic and acidic residues; the sequence is EDEERKRVEQQKNKE. Polar residues predominate over residues 122 to 138; sequence NASTSAPTSSRNGGQSV. Positions 307–318 are enriched in polar residues; it reads SSSESPTKQSPM. Composition is skewed to low complexity over residues 341–359, 391–404, and 413–456; these read QLQQ…QQEM, QQQQ…HHQM, and QAHQ…HHQM.

Component of a complex consisting of at least a lin-12/Notch intracellular domain (NICD), lag-1, and lag-3. Interacts with a NICD of lin-12/Notch or glp-1/Notch; the interactions are direct. Expressed in the progenitor zone and the early pachytene region of the hermaphrodite gonad.

Its subcellular location is the nucleus. Functionally, glp-1/Notch and lin-12/Notch proteins promote signaling by recruiting lag-3 to target promoters, where it functions as a transcriptional activator, probably as part of a complex with a Notch intracellular domain (NICD) and the transcription regulator lag-1. Involved in the p53-mediated germ-cell apoptotic response to DNA damage, perhaps acting as a transcriptional activator. May regulate phosphatase lip-1 mRNA transcription downstream of glp-1. This is Protein lag-3 (sel-8) from Caenorhabditis elegans.